The primary structure comprises 256 residues: Probable septum site-determining protein MinC (256 aa).

The segment at arginine 105 to threonine 143 is disordered. Residues proline 120–proline 142 show a composition bias toward low complexity.

It belongs to the MinC family. As to quaternary structure, interacts with MinD and FtsZ.

Its function is as follows. Cell division inhibitor that blocks the formation of polar Z ring septums. Rapidly oscillates between the poles of the cell to destabilize FtsZ filaments that have formed before they mature into polar Z rings. Prevents FtsZ polymerization. This Burkholderia vietnamiensis (strain G4 / LMG 22486) (Burkholderia cepacia (strain R1808)) protein is Probable septum site-determining protein MinC.